Reading from the N-terminus, the 181-residue chain is MATPLSQVRQNYHQDCEAAVNRQINLELYASYVYLSMSYYFDRDDVALKNFAKYFLHQSHEEREHAEKLMKLQNQRGGRIFLQDIKKPDRDDWENGLTAMECALHLEKNVNQSLLELHKLATEKNDPHLCDFIETHYLDEQVKAIKELGDHVTNLRKMGAPKYGMAEYLFDKHTLGHSDES.

Positions 10–159 (QNYHQDCEAA…DHVTNLRKMG (150 aa)) constitute a Ferritin-like diiron domain. Residues glutamate 27, glutamate 62, histidine 65, glutamate 107, and glutamine 141 each coordinate Fe cation.

The protein belongs to the ferritin family. As to quaternary structure, oligomer of 24 subunits. There are two types of subunits: L (light) chain and H (heavy) chain. The major chain can be light or heavy, depending on the species and tissue type. The functional molecule forms a roughly spherical shell with a diameter of 12 nm and contains a central cavity into which the insoluble mineral iron core is deposited. Expressed in erythroblasts (at protein level). Expressed in heart, liver, spleen, lung, kidney, large intestine, small intestine, muscle, glandular stomach, ovary and oviduct.

Its subcellular location is the cytoplasm. The protein localises to the lysosome. It localises to the cytoplasmic vesicle. The protein resides in the autophagosome. The catalysed reaction is 4 Fe(2+) + O2 + 4 H(+) = 4 Fe(3+) + 2 H2O. Stores iron in a soluble, non-toxic, readily available form. Important for iron homeostasis. Has ferroxidase activity. Iron is taken up in the ferrous form and deposited as ferric hydroxides after oxidation. Also plays a role in delivery of iron to cells. Mediates iron uptake in capsule cells of the developing kidney. Delivery to lysosomes is mediated by the cargo receptor NCOA4 for autophagic degradation and release of iron. In terms of biological role, inhibits translation of various mRNA species in vitro. Associates with a 35S prosome-like particle that contains non-translated mRNAs in a complex with proteins. May be involved in pre-translational regulation of some mRNA. The protein is Ferritin heavy chain of Anas platyrhynchos (Mallard).